Here is an 85-residue protein sequence, read N- to C-terminus: Cytochrome c6 (85 aa).

Cys-14, Cys-17, His-18, and Met-58 together coordinate heme c.

It belongs to the cytochrome c family. PetJ subfamily. As to quaternary structure, monomer. In terms of processing, binds 1 heme c group covalently per subunit.

Its subcellular location is the plastid. It is found in the chloroplast thylakoid lumen. In terms of biological role, functions as an electron carrier between membrane-bound cytochrome b6-f and photosystem I in oxygenic photosynthesis. This is Cytochrome c6 (petJ) from Pyropia tenera (Nori).